The following is a 138-amino-acid chain: Small ribosomal subunit protein uS9 (138 aa).

Positions 99 to 138 (DPDNRPPLKTEGYLTRDPRAKERKKYGLHKARKAPQYSKR) are disordered. Over residues 100–118 (PDNRPPLKTEGYLTRDPRA) the composition is skewed to basic and acidic residues. The segment covering 119–138 (KERKKYGLHKARKAPQYSKR) has biased composition (basic residues).

The protein belongs to the universal ribosomal protein uS9 family.

The polypeptide is Small ribosomal subunit protein uS9 (Nostoc punctiforme (strain ATCC 29133 / PCC 73102)).